The primary structure comprises 163 residues: Cytochrome c-type biogenesis protein CcmE (163 aa).

The Cytoplasmic segment spans residues 1 to 8 (MNPRRKKR). A helical; Signal-anchor for type II membrane protein membrane pass occupies residues 9–29 (LTIILAISAGLAAVIGLVLYA). Over 30–163 (LSQNIDLFYT…TEAQLKGSKQ (134 aa)) the chain is Periplasmic. Histidine 131 and tyrosine 135 together coordinate heme.

It belongs to the CcmE/CycJ family.

The protein resides in the cell inner membrane. Its function is as follows. Heme chaperone required for the biogenesis of c-type cytochromes. Transiently binds heme delivered by CcmC and transfers the heme to apo-cytochromes in a process facilitated by CcmF and CcmH. The polypeptide is Cytochrome c-type biogenesis protein CcmE (Aeromonas hydrophila subsp. hydrophila (strain ATCC 7966 / DSM 30187 / BCRC 13018 / CCUG 14551 / JCM 1027 / KCTC 2358 / NCIMB 9240 / NCTC 8049)).